The following is a 212-amino-acid chain: NAD(P)H dehydrogenase (quinone) 3 (212 aa).

The Flavodoxin-like domain occupies 4-192; that stretch reads MLVLYYSSYG…DGARFQGRHV (189 aa). FMN-binding positions include 10-15 and 78-80; these read SSYGHI and TRF. Tyr12 lines the NAD(+) pocket. Trp98 serves as a coordination point for substrate. FMN-binding positions include 113-119 and His134; that span reads STGSQHG. The tract at residues 161-182 is disordered; it reads YGASTLAEDENHRDRSPSANEL.

Belongs to the WrbA family. It depends on FMN as a cofactor.

The catalysed reaction is a quinone + NADH + H(+) = a quinol + NAD(+). It carries out the reaction a quinone + NADPH + H(+) = a quinol + NADP(+). This Rhizobium meliloti (strain 1021) (Ensifer meliloti) protein is NAD(P)H dehydrogenase (quinone) 3.